A 346-amino-acid chain; its full sequence is Glycerol-3-phosphate dehydrogenase [NAD(P)+] (346 aa).

Positions 11, 12, 32, 33, and 106 each coordinate NADPH. Sn-glycerol 3-phosphate is bound by residues lysine 106, glycine 137, and serine 139. Residue alanine 141 coordinates NADPH. Residues lysine 193, aspartate 246, serine 256, arginine 257, and asparagine 258 each contribute to the sn-glycerol 3-phosphate site. The active-site Proton acceptor is lysine 193. Position 257 (arginine 257) interacts with NADPH. NADPH is bound by residues valine 281 and glutamate 283.

It belongs to the NAD-dependent glycerol-3-phosphate dehydrogenase family.

The protein resides in the cytoplasm. The enzyme catalyses sn-glycerol 3-phosphate + NAD(+) = dihydroxyacetone phosphate + NADH + H(+). It catalyses the reaction sn-glycerol 3-phosphate + NADP(+) = dihydroxyacetone phosphate + NADPH + H(+). It functions in the pathway membrane lipid metabolism; glycerophospholipid metabolism. Functionally, catalyzes the reduction of the glycolytic intermediate dihydroxyacetone phosphate (DHAP) to sn-glycerol 3-phosphate (G3P), the key precursor for phospholipid synthesis. The chain is Glycerol-3-phosphate dehydrogenase [NAD(P)+] from Bacillus licheniformis (strain ATCC 14580 / DSM 13 / JCM 2505 / CCUG 7422 / NBRC 12200 / NCIMB 9375 / NCTC 10341 / NRRL NRS-1264 / Gibson 46).